A 98-amino-acid chain; its full sequence is MPLINVAGSLLYSALYFSAESEYMQKAHSASDLSYFFASGSNQTERAGSYIGSRQIRCLSSIGSSALTKFVVSLKQPNPPVEPSSKALSHASPPSVSS.

The interval 77 to 98 (PNPPVEPSSKALSHASPPSVSS) is disordered.

This is Putative protein p20 (20) from Escherichia coli (Bacteriophage APSE-1).